Reading from the N-terminus, the 426-residue chain is Histidinol dehydrogenase (426 aa).

Tyrosine 125, glutamine 187, and asparagine 210 together coordinate NAD(+). Substrate is bound by residues serine 233, glutamine 255, and histidine 258. 2 residues coordinate Zn(2+): glutamine 255 and histidine 258. Catalysis depends on proton acceptor residues glutamate 323 and histidine 324. 4 residues coordinate substrate: histidine 324, aspartate 357, glutamate 411, and histidine 416. Residue aspartate 357 coordinates Zn(2+). Position 416 (histidine 416) interacts with Zn(2+).

It belongs to the histidinol dehydrogenase family. Zn(2+) serves as cofactor.

It catalyses the reaction L-histidinol + 2 NAD(+) + H2O = L-histidine + 2 NADH + 3 H(+). It functions in the pathway amino-acid biosynthesis; L-histidine biosynthesis; L-histidine from 5-phospho-alpha-D-ribose 1-diphosphate: step 9/9. In terms of biological role, catalyzes the sequential NAD-dependent oxidations of L-histidinol to L-histidinaldehyde and then to L-histidine. This Methanothermobacter thermautotrophicus (strain ATCC 29096 / DSM 1053 / JCM 10044 / NBRC 100330 / Delta H) (Methanobacterium thermoautotrophicum) protein is Histidinol dehydrogenase (hisD).